The primary structure comprises 115 residues: Ribosomal protein uS4-like (115 aa).

It belongs to the universal ribosomal protein uS4 family.

This Azoarcus sp. (strain BH72) protein is Ribosomal protein uS4-like.